The sequence spans 207 residues: Outer-membrane lipoprotein carrier protein (207 aa).

The first 21 residues, 1-21 (MRAIRMLLVSALAMGAVSAHA), serve as a signal peptide directing secretion.

It belongs to the LolA family. In terms of assembly, monomer.

The protein resides in the periplasm. In terms of biological role, participates in the translocation of lipoproteins from the inner membrane to the outer membrane. Only forms a complex with a lipoprotein if the residue after the N-terminal Cys is not an aspartate (The Asp acts as a targeting signal to indicate that the lipoprotein should stay in the inner membrane). In Pseudomonas entomophila (strain L48), this protein is Outer-membrane lipoprotein carrier protein.